The sequence spans 545 residues: MAKDIYFNEDARKSLLSGVEKLSNAVKVTLGPKGRNVLIDKKFGSPTVTKDGVSVAREIELENPFENMGAQLLKEVAIKTNDVAGDGTTTATVLAYAIAREGLKNVSSGINPIGIKKGIDHAVNLAAEKIRQSAKKITTKEEIAQVASISANNDSYIGEKIAEAMDKVGKDGVITVEESKTFDTTISYVEGMQFDRGYLSPYFSTNKENMSVSFDDAFILIYEKKISSIKELLPVLEKVLGTNKPLLIIAEDIEGDALAALVLNSVRGALKVCAIKSPGFGDRRKAMLEDIAVLTGGVLISEELGITLETVEIEQLGQAKTIKVDKDNTTIINTGNKEQIKERSELIKKQIEDSTSEYDKEKLQERLAKLVGGVAVINVGAVTEVELKEKKHRVEDALSATRAAVEEGVVPGGGSTLIEVAMYLDTIDTSKLSYEEKQGFEIVKRSLEEPMRQIISNAGFEGSIYIHQIKTEKKGLGFDASSFKWVNMIESGIIDPAKVTRSALQNAASIAGLLLTTECAITDIKEEKNTSGGGGYPMDPGMGMM.

ATP contacts are provided by residues 29 to 32 (TLGP), Lys50, 86 to 90 (DGTTT), Gly413, and Asp495.

The protein belongs to the chaperonin (HSP60) family. Forms a cylinder of 14 subunits composed of two heptameric rings stacked back-to-back. Interacts with the co-chaperonin GroES.

The protein localises to the cytoplasm. The catalysed reaction is ATP + H2O + a folded polypeptide = ADP + phosphate + an unfolded polypeptide.. In terms of biological role, together with its co-chaperonin GroES, plays an essential role in assisting protein folding. The GroEL-GroES system forms a nano-cage that allows encapsulation of the non-native substrate proteins and provides a physical environment optimized to promote and accelerate protein folding. The chain is Chaperonin GroEL from Borrelia garinii subsp. bavariensis (strain ATCC BAA-2496 / DSM 23469 / PBi) (Borreliella bavariensis).